Here is a 481-residue protein sequence, read N- to C-terminus: Sphingosine kinase 2 (481 aa).

A DAGKc domain is found at 111 to 253; that stretch reads GRPKRLLVFV…VDVATIAQGN (143 aa). ATP contacts are provided by residues 121-123 and threonine 153; that span reads NPF. 178 to 181 provides a ligand contact to substrate; that stretch reads SGDG. Catalysis depends on aspartate 180, which acts as the Proton donor/acceptor. Residues glutamate 185 and 210–212 contribute to the ATP site; that span reads GTG. Residue aspartate 271 coordinates substrate. Residues arginine 278, arginine 284, and 441–443 each bind ATP; that span reads DGE.

It depends on Mg(2+) as a cofactor. As to expression, highly expressed in flowers and siliques and at lower levels in roots, leaves and stems.

It is found in the vacuole membrane. It catalyses the reaction a sphingoid base + ATP = a sphingoid 1-phosphate + ADP + H(+). Its activity is regulated as follows. Activated by phosphatidic acid (PA). Binding with PA stimulates the activity by promoting the binding of substrate to the catalytic site. Its function is as follows. Involved in the production of sphingolipid metabolites. Phosphorylates sphingosine and various l sphingoid long-chain base (LCB) products, such as phytosphingosine (PHS, 4-hydroxysphinganine), 4-hydroxy-8-sphingenine, 4,8-sphingadienine and D-erythro-dihydrosphingosine, but has a very few activity toward D,L-threo- dihydrosphingosine. Is required for abscisic acid (ABA) signaling that mediates stomatal closure, inhibition of seed germination and root elongation. May function upstream of PLDALPHA1 and phosphatidic acid (PA) in an amplification response to ABA that mediates stomatal closure. The chain is Sphingosine kinase 2 (SPHK2) from Arabidopsis thaliana (Mouse-ear cress).